A 175-amino-acid chain; its full sequence is Large ribosomal subunit protein uL10 (175 aa).

The protein belongs to the universal ribosomal protein uL10 family. In terms of assembly, part of the ribosomal stalk of the 50S ribosomal subunit. The N-terminus interacts with L11 and the large rRNA to form the base of the stalk. The C-terminus forms an elongated spine to which L12 dimers bind in a sequential fashion forming a multimeric L10(L12)X complex.

In terms of biological role, forms part of the ribosomal stalk, playing a central role in the interaction of the ribosome with GTP-bound translation factors. The polypeptide is Large ribosomal subunit protein uL10 (Prochlorococcus marinus subsp. pastoris (strain CCMP1986 / NIES-2087 / MED4)).